Consider the following 275-residue polypeptide: MPRKAREYPEEGEFVVATVKRIHNYGAFLELDEYPGKEAFMHISEVASTWVRNIRDYLKEGQKVVAKVIRVDPRKGHIDLSLRRVTQQQRKAKLQEFKRAQKAENLLRLAAEKLGKDFEAAWREVWVPLEEEWGEVYAAFEDAAKDGIEVLKGHVPDEWLPVLKEIVENYVEVPTVTIDAEFEITVPKPNGVEIIKEALIRARDRANKEKDIEVKFTYQGAPRYRIDITAPDYYKAEEVLEDIAEEILRVIKQAGGEATLLRKEKRIRKVKKRKK.

The region spanning 12–83 (GEFVVATVKR…RKGHIDLSLR (72 aa)) is the S1 motif domain.

It belongs to the eIF-2-alpha family. In terms of assembly, heterotrimer composed of an alpha, a beta and a gamma chain.

In terms of biological role, eIF-2 functions in the early steps of protein synthesis by forming a ternary complex with GTP and initiator tRNA. The chain is Translation initiation factor 2 subunit alpha (eif2a) from Pyrococcus horikoshii (strain ATCC 700860 / DSM 12428 / JCM 9974 / NBRC 100139 / OT-3).